A 181-amino-acid polypeptide reads, in one-letter code: ATP-dependent protease subunit HslV (181 aa).

Residue threonine 11 is part of the active site. Alanine 166, cysteine 169, and threonine 172 together coordinate Na(+).

It belongs to the peptidase T1B family. HslV subfamily. In terms of assembly, a double ring-shaped homohexamer of HslV is capped on each side by a ring-shaped HslU homohexamer. The assembly of the HslU/HslV complex is dependent on binding of ATP.

The protein localises to the cytoplasm. It carries out the reaction ATP-dependent cleavage of peptide bonds with broad specificity.. With respect to regulation, allosterically activated by HslU binding. Functionally, protease subunit of a proteasome-like degradation complex believed to be a general protein degrading machinery. In Chlorobaculum parvum (strain DSM 263 / NCIMB 8327) (Chlorobium vibrioforme subsp. thiosulfatophilum), this protein is ATP-dependent protease subunit HslV.